The chain runs to 420 residues: 4-hydroxy-3-methylbut-2-en-1-yl diphosphate synthase (flavodoxin) (420 aa).

Positions 307, 310, 353, and 360 each coordinate [4Fe-4S] cluster.

Belongs to the IspG family. [4Fe-4S] cluster serves as cofactor.

The catalysed reaction is (2E)-4-hydroxy-3-methylbut-2-enyl diphosphate + oxidized [flavodoxin] + H2O + 2 H(+) = 2-C-methyl-D-erythritol 2,4-cyclic diphosphate + reduced [flavodoxin]. It participates in isoprenoid biosynthesis; isopentenyl diphosphate biosynthesis via DXP pathway; isopentenyl diphosphate from 1-deoxy-D-xylulose 5-phosphate: step 5/6. Functionally, converts 2C-methyl-D-erythritol 2,4-cyclodiphosphate (ME-2,4cPP) into 1-hydroxy-2-methyl-2-(E)-butenyl 4-diphosphate. The chain is 4-hydroxy-3-methylbut-2-en-1-yl diphosphate synthase (flavodoxin) from Brucella suis (strain ATCC 23445 / NCTC 10510).